Reading from the N-terminus, the 340-residue chain is Glyceraldehyde-3-phosphate dehydrogenase (340 aa).

NAD(+) is bound by residues 11–12 (TI) and Gly109. 138 to 140 (SCN) provides a ligand contact to D-glyceraldehyde 3-phosphate. Residue Cys139 is the Nucleophile of the active site. Arg167 lines the NAD(+) pocket. 193–194 (HA) serves as a coordination point for D-glyceraldehyde 3-phosphate. Residue Gln300 participates in NAD(+) binding.

This sequence belongs to the glyceraldehyde-3-phosphate dehydrogenase family. In terms of assembly, homotetramer.

It localises to the cytoplasm. The catalysed reaction is D-glyceraldehyde 3-phosphate + phosphate + NADP(+) = (2R)-3-phospho-glyceroyl phosphate + NADPH + H(+). The enzyme catalyses D-glyceraldehyde 3-phosphate + phosphate + NAD(+) = (2R)-3-phospho-glyceroyl phosphate + NADH + H(+). Its pathway is carbohydrate degradation; glycolysis; pyruvate from D-glyceraldehyde 3-phosphate: step 1/5. This chain is Glyceraldehyde-3-phosphate dehydrogenase, found in Metallosphaera sedula (strain ATCC 51363 / DSM 5348 / JCM 9185 / NBRC 15509 / TH2).